The primary structure comprises 276 residues: MPVKGFKPYSPGRRQMTVSTFEEITKTTPERSLLAPLKSKAGRNNQGKLTVRHQGGGHKRKYRLIDFKRNKDSVPAKVASIEYDPNRSANIALLHYLDGHKAYILAPNGLQVGQMVVSGPDADIKVGNALPIKNIPVGTLLHNIEMKPGKGAQLVRSAGGSAQLMAKEGKYATLRLPSGEMRMVHIDCRATIGQVGNLEHENINIGKAGRSRWLGIRPTVRGAVMNPNDHPHGGGEGRNPIGRNPVTPWGKPALGAKTRKKKNPSNRFIVKRRGKK.

A disordered region spans residues 225–276 (MNPNDHPHGGGEGRNPIGRNPVTPWGKPALGAKTRKKKNPSNRFIVKRRGKK). The segment covering 257 to 276 (KTRKKKNPSNRFIVKRRGKK) has biased composition (basic residues).

This sequence belongs to the universal ribosomal protein uL2 family. Part of the 50S ribosomal subunit. Forms a bridge to the 30S subunit in the 70S ribosome.

In terms of biological role, one of the primary rRNA binding proteins. Required for association of the 30S and 50S subunits to form the 70S ribosome, for tRNA binding and peptide bond formation. It has been suggested to have peptidyltransferase activity; this is somewhat controversial. Makes several contacts with the 16S rRNA in the 70S ribosome. This is Large ribosomal subunit protein uL2 from Desulfitobacterium hafniense (strain DSM 10664 / DCB-2).